A 268-amino-acid polypeptide reads, in one-letter code: Formamidopyrimidine-DNA glycosylase (268 aa).

Pro-2 serves as the catalytic Schiff-base intermediate with DNA. Glu-3 functions as the Proton donor in the catalytic mechanism. The Proton donor; for beta-elimination activity role is filled by Lys-56. His-91, Arg-110, and Arg-149 together coordinate DNA. An FPG-type zinc finger spans residues 234-268 (QVYGRFNQACPNCGQPLKRSRIGGRSSHYCEKCQQ). Arg-258 (proton donor; for delta-elimination activity) is an active-site residue.

Belongs to the FPG family. Monomer. It depends on Zn(2+) as a cofactor.

The catalysed reaction is Hydrolysis of DNA containing ring-opened 7-methylguanine residues, releasing 2,6-diamino-4-hydroxy-5-(N-methyl)formamidopyrimidine.. It carries out the reaction 2'-deoxyribonucleotide-(2'-deoxyribose 5'-phosphate)-2'-deoxyribonucleotide-DNA = a 3'-end 2'-deoxyribonucleotide-(2,3-dehydro-2,3-deoxyribose 5'-phosphate)-DNA + a 5'-end 5'-phospho-2'-deoxyribonucleoside-DNA + H(+). Involved in base excision repair of DNA damaged by oxidation or by mutagenic agents. Acts as a DNA glycosylase that recognizes and removes damaged bases. Has a preference for oxidized purines, such as 7,8-dihydro-8-oxoguanine (8-oxoG). Has AP (apurinic/apyrimidinic) lyase activity and introduces nicks in the DNA strand. Cleaves the DNA backbone by beta-delta elimination to generate a single-strand break at the site of the removed base with both 3'- and 5'-phosphates. The protein is Formamidopyrimidine-DNA glycosylase of Syntrophomonas wolfei subsp. wolfei (strain DSM 2245B / Goettingen).